The primary structure comprises 168 residues: Crossover junction endodeoxyribonuclease RuvC (168 aa).

Residues Asp7, Glu64, and Asp136 contribute to the active site. Mg(2+) contacts are provided by Asp7, Glu64, and Asp136.

This sequence belongs to the RuvC family. In terms of assembly, homodimer which binds Holliday junction (HJ) DNA. The HJ becomes 2-fold symmetrical on binding to RuvC with unstacked arms; it has a different conformation from HJ DNA in complex with RuvA. In the full resolvosome a probable DNA-RuvA(4)-RuvB(12)-RuvC(2) complex forms which resolves the HJ. Mg(2+) serves as cofactor.

The protein resides in the cytoplasm. The enzyme catalyses Endonucleolytic cleavage at a junction such as a reciprocal single-stranded crossover between two homologous DNA duplexes (Holliday junction).. The RuvA-RuvB-RuvC complex processes Holliday junction (HJ) DNA during genetic recombination and DNA repair. Endonuclease that resolves HJ intermediates. Cleaves cruciform DNA by making single-stranded nicks across the HJ at symmetrical positions within the homologous arms, yielding a 5'-phosphate and a 3'-hydroxyl group; requires a central core of homology in the junction. The consensus cleavage sequence is 5'-(A/T)TT(C/G)-3'. Cleavage occurs on the 3'-side of the TT dinucleotide at the point of strand exchange. HJ branch migration catalyzed by RuvA-RuvB allows RuvC to scan DNA until it finds its consensus sequence, where it cleaves and resolves the cruciform DNA. This Polynucleobacter necessarius subsp. necessarius (strain STIR1) protein is Crossover junction endodeoxyribonuclease RuvC.